Reading from the N-terminus, the 85-residue chain is MKTFSVAVAVAVVLAFICLQESSAVPVTEVQELEEPMSNEYQEMPVESWKMPYNNRHKRHSSPGGCRFCCNCCPNMSGCGVCCRF.

The signal sequence occupies residues 1–24 (MKTFSVAVAVAVVLAFICLQESSA). Residues 25 to 64 (VPVTEVQELEEPMSNEYQEMPVESWKMPYNNRHKRHSSPG) constitute a propeptide that is removed on maturation. 4 cysteine pairs are disulfide-bonded: C66–C83, C69–C72, C70–C79, and C73–C82.

In terms of tissue distribution, predominantly expressed in liver.

It is found in the secreted. In terms of biological role, seems to act as a signaling molecule involved in the maintenance of iron homeostasis. Seems to be required in conjunction with HFE to regulate both intestinal iron absorption and iron storage in macrophages. Antimicrobial activity against Gram-negative bacteria such as E.coli. The polypeptide is Hepcidin (hamp) (Morone chrysops x Morone saxatilis (White bass x Striped bass)).